The sequence spans 845 residues: Translation initiation factor IF-2 (845 aa).

A disordered region spans residues methionine 1 to lysine 260. Over residues alanine 68–proline 81 the composition is skewed to pro residues. Positions arginine 101 to alanine 140 are enriched in basic and acidic residues. Composition is skewed to low complexity over residues alanine 141–alanine 166 and threonine 173–proline 191. Positions alanine 194 to arginine 215 are enriched in basic and acidic residues. One can recognise a tr-type G domain in the interval proline 344–lysine 514. The interval glycine 353–threonine 360 is G1. Glycine 353–threonine 360 serves as a coordination point for GTP. Residues glycine 378–histidine 382 are G2. The interval aspartate 400–glycine 403 is G3. GTP-binding positions include aspartate 400–histidine 404 and asparagine 454–aspartate 457. The segment at asparagine 454–aspartate 457 is G4. Positions serine 490–leucine 492 are G5.

The protein belongs to the TRAFAC class translation factor GTPase superfamily. Classic translation factor GTPase family. IF-2 subfamily.

It is found in the cytoplasm. Its function is as follows. One of the essential components for the initiation of protein synthesis. Protects formylmethionyl-tRNA from spontaneous hydrolysis and promotes its binding to the 30S ribosomal subunits. Also involved in the hydrolysis of GTP during the formation of the 70S ribosomal complex. The chain is Translation initiation factor IF-2 from Sphingopyxis alaskensis (strain DSM 13593 / LMG 18877 / RB2256) (Sphingomonas alaskensis).